The chain runs to 332 residues: Ferredoxin--NADP reductase (332 aa).

FAD is bound by residues aspartate 33, glutamine 41, tyrosine 46, alanine 86, isoleucine 121, aspartate 282, and serine 325.

This sequence belongs to the ferredoxin--NADP reductase type 2 family. As to quaternary structure, homodimer. FAD serves as cofactor.

It carries out the reaction 2 reduced [2Fe-2S]-[ferredoxin] + NADP(+) + H(+) = 2 oxidized [2Fe-2S]-[ferredoxin] + NADPH. The sequence is that of Ferredoxin--NADP reductase from Metallosphaera sedula (strain ATCC 51363 / DSM 5348 / JCM 9185 / NBRC 15509 / TH2).